Consider the following 118-residue polypeptide: Large ribosomal subunit protein bL20 (118 aa).

Belongs to the bacterial ribosomal protein bL20 family.

In terms of biological role, binds directly to 23S ribosomal RNA and is necessary for the in vitro assembly process of the 50S ribosomal subunit. It is not involved in the protein synthesizing functions of that subunit. This Agathobacter rectalis (strain ATCC 33656 / DSM 3377 / JCM 17463 / KCTC 5835 / VPI 0990) (Eubacterium rectale) protein is Large ribosomal subunit protein bL20.